The primary structure comprises 494 residues: Glutamate--tRNA ligase (494 aa).

Residues 9–19 (PSPTGDPHVGT) carry the 'HIGH' region motif. Positions 250-254 (KLSKR) match the 'KMSKS' region motif. ATP is bound at residue lysine 253.

The protein belongs to the class-I aminoacyl-tRNA synthetase family. Glutamate--tRNA ligase type 1 subfamily. Monomer.

The protein resides in the cytoplasm. It carries out the reaction tRNA(Glu) + L-glutamate + ATP = L-glutamyl-tRNA(Glu) + AMP + diphosphate. In terms of biological role, catalyzes the attachment of glutamate to tRNA(Glu) in a two-step reaction: glutamate is first activated by ATP to form Glu-AMP and then transferred to the acceptor end of tRNA(Glu). The protein is Glutamate--tRNA ligase of Alcanivorax borkumensis (strain ATCC 700651 / DSM 11573 / NCIMB 13689 / SK2).